A 182-amino-acid polypeptide reads, in one-letter code: Large ribosomal subunit protein uL5 (182 aa).

Belongs to the universal ribosomal protein uL5 family. As to quaternary structure, part of the 50S ribosomal subunit; part of the 5S rRNA/L5/L18/L25 subcomplex. Contacts the 5S rRNA and the P site tRNA. Forms a bridge to the 30S subunit in the 70S ribosome.

In terms of biological role, this is one of the proteins that bind and probably mediate the attachment of the 5S RNA into the large ribosomal subunit, where it forms part of the central protuberance. In the 70S ribosome it contacts protein S13 of the 30S subunit (bridge B1b), connecting the 2 subunits; this bridge is implicated in subunit movement. Contacts the P site tRNA; the 5S rRNA and some of its associated proteins might help stabilize positioning of ribosome-bound tRNAs. The chain is Large ribosomal subunit protein uL5 from Coxiella burnetii (strain CbuG_Q212) (Coxiella burnetii (strain Q212)).